The chain runs to 149 residues: UPF0178 protein NT01CX_0440 (149 aa).

Belongs to the UPF0178 family.

This chain is UPF0178 protein NT01CX_0440, found in Clostridium novyi (strain NT).